The primary structure comprises 704 residues: MARTTPIARYRNIGISAHIDAGKTTTTERILFYTGVNHKIGEVHDGAATMDWMEQEQERGITITSAATTAFWSGMAKQYEPHRVNIIDTPGHVDFTIEVERSMRVLDGAVMVYCAVGGVQPQSETVWRQANKYKVPRIAFVNKMDRMGANFLKVVGQIKSRLGANPVPLQLAIGAEEGFTGVVDLVKMKAINWNDADQGVTFEYEDIPADMQDLADEWHQNLIESAAEASEELMEKYLGGEELTEEEIKKALRQRVLNNEIILVTCGSAFKNKGVQAMLDAVVDYLPSPVDVPAINGILDDGKDTPAERHASDDEPFAALAFKIATDPFVGNLTFFRVYSGVVNSGDTVLNPVKSARERFGRIVQMHANKREEIKEVRAGDIAAAIGLKDVTTGDTLCDPDNVIILERMEFPEPVISIAVEPKTKADQEKMGLALGRLAKEDPSFRVWTDEESNQTIIAGMGELHLDIIVDRMKREFNVEANVGKPQVAYREAIRAKVTDIEGKHAKQSGGRGQYGHVVIDMYPLEPGSNPKGYEFINDIKGGVIPGEYIPAVDKGIQEQLKAGPLAGYPVVDLGVRLHFGSFHDVDSSELAFKLAASIAFKDGFKKAKPVLLEPIMKVEVETPEENTGDVIGDLSRRRGMLRGQESNVTGVVIHAEVPLSEMFGYATQLRSLTKGRASYSMEFLKYDDAPNNVAQAVIEARGK.

Residues 8–290 form the tr-type G domain; it reads ARYRNIGISA…AVVDYLPSPV (283 aa). Residues 17–24, 88–92, and 142–145 contribute to the GTP site; these read AHIDAGKT, DTPGH, and NKMD.

This sequence belongs to the TRAFAC class translation factor GTPase superfamily. Classic translation factor GTPase family. EF-G/EF-2 subfamily.

It is found in the cytoplasm. In terms of biological role, catalyzes the GTP-dependent ribosomal translocation step during translation elongation. During this step, the ribosome changes from the pre-translocational (PRE) to the post-translocational (POST) state as the newly formed A-site-bound peptidyl-tRNA and P-site-bound deacylated tRNA move to the P and E sites, respectively. Catalyzes the coordinated movement of the two tRNA molecules, the mRNA and conformational changes in the ribosome. In Pectobacterium carotovorum subsp. carotovorum (strain PC1), this protein is Elongation factor G.